Here is a 445-residue protein sequence, read N- to C-terminus: Tubulin beta chain (445 aa).

An MREI motif motif is present at residues 1-4; it reads MREI. Gln-11 is a binding site for GTP. Ser-40 is subject to Phosphoserine. The residue at position 58 (Lys-58) is an N6-acetyllysine; alternate. Lys-58 bears the N6-succinyllysine; alternate mark. Lys-58 participates in a covalent cross-link: Glycyl lysine isopeptide (Lys-Gly) (interchain with G-Cter in ubiquitin); alternate. 5 residues coordinate GTP: Glu-69, Ser-138, Gly-142, Thr-143, and Gly-144. Glu-69 serves as a coordination point for Mg(2+). Residue Ser-172 is modified to Phosphoserine; by CDK1. The GTP site is built by Asn-204 and Asn-226. A phosphothreonine mark is found at Thr-285 and Thr-290. Arg-318 carries the omega-N-methylarginine modification. Lys-324 is covalently cross-linked (Glycyl lysine isopeptide (Lys-Gly) (interchain with G-Cter in ubiquitin)). Residues 424–445 form a disordered region; it reads QYQDATADEQGEFEEEGEEDEA. Residues 429–445 show a composition bias toward acidic residues; it reads TADEQGEFEEEGEEDEA. Glu-438 bears the 5-glutamyl polyglutamate mark.

The protein belongs to the tubulin family. In terms of assembly, dimer of alpha and beta chains. A typical microtubule is a hollow water-filled tube with an outer diameter of 25 nm and an inner diameter of 15 nM. Alpha-beta heterodimers associate head-to-tail to form protofilaments running lengthwise along the microtubule wall with the beta-tubulin subunit facing the microtubule plus end conferring a structural polarity. Microtubules usually have 13 protofilaments but different protofilament numbers can be found in some organisms and specialized cells. Interacts with NCKAP5L. Mg(2+) serves as cofactor. Some glutamate residues at the C-terminus are polyglycylated, resulting in polyglycine chains on the gamma-carboxyl group. Glycylation is mainly limited to tubulin incorporated into axonemes (cilia and flagella) whereas glutamylation is prevalent in neuronal cells, centrioles, axonemes, and the mitotic spindle. Both modifications can coexist on the same protein on adjacent residues, and lowering polyglycylation levels increases polyglutamylation, and reciprocally. Cilia and flagella glycylation is required for their stability and maintenance. Flagella glycylation controls sperm motility. Post-translationally, some glutamate residues at the C-terminus are polyglutamylated, resulting in polyglutamate chains on the gamma-carboxyl group. Polyglutamylation plays a key role in microtubule severing by spastin (SPAST). SPAST preferentially recognizes and acts on microtubules decorated with short polyglutamate tails: severing activity by SPAST increases as the number of glutamates per tubulin rises from one to eight, but decreases beyond this glutamylation threshold. In terms of processing, phosphorylated on Ser-172 by CDK1 during the cell cycle, from metaphase to telophase, but not in interphase. This phosphorylation inhibits tubulin incorporation into microtubules.

It is found in the cytoplasm. The protein localises to the cytoskeleton. In terms of biological role, tubulin is the major constituent of microtubules, a cylinder consisting of laterally associated linear protofilaments composed of alpha- and beta-tubulin heterodimers. Microtubules grow by the addition of GTP-tubulin dimers to the microtubule end, where a stabilizing cap forms. Below the cap, tubulin dimers are in GDP-bound state, owing to GTPase activity of alpha-tubulin. This is Tubulin beta chain from Sus scrofa (Pig).